The following is a 246-amino-acid chain: 1-(5-phosphoribosyl)-5-[(5-phosphoribosylamino)methylideneamino] imidazole-4-carboxamide isomerase (246 aa).

Asp-8 serves as the catalytic Proton acceptor. The Proton donor role is filled by Asp-131.

The protein belongs to the HisA/HisF family.

The protein resides in the cytoplasm. It carries out the reaction 1-(5-phospho-beta-D-ribosyl)-5-[(5-phospho-beta-D-ribosylamino)methylideneamino]imidazole-4-carboxamide = 5-[(5-phospho-1-deoxy-D-ribulos-1-ylimino)methylamino]-1-(5-phospho-beta-D-ribosyl)imidazole-4-carboxamide. It functions in the pathway amino-acid biosynthesis; L-histidine biosynthesis; L-histidine from 5-phospho-alpha-D-ribose 1-diphosphate: step 4/9. The polypeptide is 1-(5-phosphoribosyl)-5-[(5-phosphoribosylamino)methylideneamino] imidazole-4-carboxamide isomerase (Polaromonas sp. (strain JS666 / ATCC BAA-500)).